The primary structure comprises 100 residues: Probable antitoxin MazE4 (100 aa).

A disordered region spans residues P77–Q100.

In terms of assembly, forms a complex with cognate toxin MazF4.

Antitoxin component of a type II toxin-antitoxin (TA) system. Labile antitoxin that binds to cognate MazF4 toxin and counteracts its endoribonuclease activity. This is Probable antitoxin MazE4 (mazE4) from Mycobacterium tuberculosis (strain CDC 1551 / Oshkosh).